A 338-amino-acid polypeptide reads, in one-letter code: Ketol-acid reductoisomerase (NADP(+)) (338 aa).

The KARI N-terminal Rossmann domain occupies 1–181 (MKVYYDKDAD…GGTRGGVIET (181 aa)). NADP(+)-binding positions include 24–27 (YGSQ), Arg-47, and Ser-52. His-107 is an active-site residue. An NADP(+)-binding site is contributed by Gly-133. A KARI C-terminal knotted domain is found at 182-327 (TFKEETETDL…SRLRDMMPWI (146 aa)). Positions 190, 194, 226, and 230 each coordinate Mg(2+). Ser-251 lines the substrate pocket.

Belongs to the ketol-acid reductoisomerase family. Mg(2+) serves as cofactor.

The catalysed reaction is (2R)-2,3-dihydroxy-3-methylbutanoate + NADP(+) = (2S)-2-acetolactate + NADPH + H(+). The enzyme catalyses (2R,3R)-2,3-dihydroxy-3-methylpentanoate + NADP(+) = (S)-2-ethyl-2-hydroxy-3-oxobutanoate + NADPH + H(+). Its pathway is amino-acid biosynthesis; L-isoleucine biosynthesis; L-isoleucine from 2-oxobutanoate: step 2/4. The protein operates within amino-acid biosynthesis; L-valine biosynthesis; L-valine from pyruvate: step 2/4. In terms of biological role, involved in the biosynthesis of branched-chain amino acids (BCAA). Catalyzes an alkyl-migration followed by a ketol-acid reduction of (S)-2-acetolactate (S2AL) to yield (R)-2,3-dihydroxy-isovalerate. In the isomerase reaction, S2AL is rearranged via a Mg-dependent methyl migration to produce 3-hydroxy-3-methyl-2-ketobutyrate (HMKB). In the reductase reaction, this 2-ketoacid undergoes a metal-dependent reduction by NADPH to yield (R)-2,3-dihydroxy-isovalerate. The polypeptide is Ketol-acid reductoisomerase (NADP(+)) (Nitrosomonas eutropha (strain DSM 101675 / C91 / Nm57)).